A 151-amino-acid chain; its full sequence is Ribosome maturation factor RimP (151 aa).

Belongs to the RimP family.

It localises to the cytoplasm. In terms of biological role, required for maturation of 30S ribosomal subunits. The polypeptide is Ribosome maturation factor RimP (Saccharophagus degradans (strain 2-40 / ATCC 43961 / DSM 17024)).